Here is a 290-residue protein sequence, read N- to C-terminus: ATP synthase gamma chain (290 aa).

It belongs to the ATPase gamma chain family. In terms of assembly, F-type ATPases have 2 components, CF(1) - the catalytic core - and CF(0) - the membrane proton channel. CF(1) has five subunits: alpha(3), beta(3), gamma(1), delta(1), epsilon(1). CF(0) has three main subunits: a, b and c.

Its subcellular location is the cell membrane. Produces ATP from ADP in the presence of a proton gradient across the membrane. The gamma chain is believed to be important in regulating ATPase activity and the flow of protons through the CF(0) complex. This chain is ATP synthase gamma chain, found in Listeria innocua serovar 6a (strain ATCC BAA-680 / CLIP 11262).